The chain runs to 346 residues: Uroporphyrinogen decarboxylase (346 aa).

Residues 21-25 (RQAGR), F40, D71, Y146, S201, and H316 contribute to the substrate site.

Belongs to the uroporphyrinogen decarboxylase family. Homodimer.

The protein localises to the cytoplasm. It carries out the reaction uroporphyrinogen III + 4 H(+) = coproporphyrinogen III + 4 CO2. Its pathway is porphyrin-containing compound metabolism; protoporphyrin-IX biosynthesis; coproporphyrinogen-III from 5-aminolevulinate: step 4/4. Its function is as follows. Catalyzes the decarboxylation of four acetate groups of uroporphyrinogen-III to yield coproporphyrinogen-III. This chain is Uroporphyrinogen decarboxylase, found in Rickettsia conorii (strain ATCC VR-613 / Malish 7).